A 130-amino-acid polypeptide reads, in one-letter code: MIGNWNYGTGRRKSAVARVFIKAGKGDIIVNGKPIADYFSRETSLMIVRQPLELTNHGQTFDIKVNVTGGGETGQAGAVRHGITRALIDYDATLKPSLSTAGFVTRDAREVERKKVGLRKARRAKQFSKR.

The protein belongs to the universal ribosomal protein uS9 family.

This Burkholderia ambifaria (strain MC40-6) protein is Small ribosomal subunit protein uS9.